Reading from the N-terminus, the 331-residue chain is Ketol-acid reductoisomerase (NADP(+)) (331 aa).

The KARI N-terminal Rossmann domain maps to 2-182; that stretch reads ARMYYDADAN…GGTRGGILET (181 aa). Residues 25–28, Ser-51, Ser-53, and 83–86 contribute to the NADP(+) site; these read YGSQ and DDVQ. His-108 is an active-site residue. Gly-134 is an NADP(+) binding site. Positions 183–328 constitute a KARI C-terminal knotted domain; it reads TFREETETDL…KDLRAMFSWL (146 aa). The Mg(2+) site is built by Asp-191, Glu-195, Glu-227, and Glu-231. Ser-252 is a substrate binding site.

Belongs to the ketol-acid reductoisomerase family. Requires Mg(2+) as cofactor.

It carries out the reaction (2R)-2,3-dihydroxy-3-methylbutanoate + NADP(+) = (2S)-2-acetolactate + NADPH + H(+). The catalysed reaction is (2R,3R)-2,3-dihydroxy-3-methylpentanoate + NADP(+) = (S)-2-ethyl-2-hydroxy-3-oxobutanoate + NADPH + H(+). It functions in the pathway amino-acid biosynthesis; L-isoleucine biosynthesis; L-isoleucine from 2-oxobutanoate: step 2/4. The protein operates within amino-acid biosynthesis; L-valine biosynthesis; L-valine from pyruvate: step 2/4. In terms of biological role, involved in the biosynthesis of branched-chain amino acids (BCAA). Catalyzes an alkyl-migration followed by a ketol-acid reduction of (S)-2-acetolactate (S2AL) to yield (R)-2,3-dihydroxy-isovalerate. In the isomerase reaction, S2AL is rearranged via a Mg-dependent methyl migration to produce 3-hydroxy-3-methyl-2-ketobutyrate (HMKB). In the reductase reaction, this 2-ketoacid undergoes a metal-dependent reduction by NADPH to yield (R)-2,3-dihydroxy-isovalerate. In Picosynechococcus sp. (strain ATCC 27264 / PCC 7002 / PR-6) (Agmenellum quadruplicatum), this protein is Ketol-acid reductoisomerase (NADP(+)).